The chain runs to 122 residues: Large ribosomal subunit protein uL14 (122 aa).

Belongs to the universal ribosomal protein uL14 family. In terms of assembly, part of the 50S ribosomal subunit. Forms a cluster with proteins L3 and L19. In the 70S ribosome, L14 and L19 interact and together make contacts with the 16S rRNA in bridges B5 and B8.

Binds to 23S rRNA. Forms part of two intersubunit bridges in the 70S ribosome. This chain is Large ribosomal subunit protein uL14, found in Rhizobium meliloti (strain 1021) (Ensifer meliloti).